We begin with the raw amino-acid sequence, 192 residues long: MQVDIGAILTGYAQGYFLMADEETGSLAWYGTEQHALIPLDERFHCPRSLRPLVRGSCFQVRINGAFEQVVEGCAARPQTWISSELKQIYLALHQAGFAHSFETWQGDTLAGGILGIALGAAFIGESMFYRIPNASKVALVKLVEHLRERGFRLFDAQLMNPHLARFGAFLMDGRDYQELLQQCLRIPCRFD.

This sequence belongs to the L/F-transferase family.

Its subcellular location is the cytoplasm. It carries out the reaction N-terminal L-lysyl-[protein] + L-leucyl-tRNA(Leu) = N-terminal L-leucyl-L-lysyl-[protein] + tRNA(Leu) + H(+). The enzyme catalyses N-terminal L-arginyl-[protein] + L-leucyl-tRNA(Leu) = N-terminal L-leucyl-L-arginyl-[protein] + tRNA(Leu) + H(+). It catalyses the reaction L-phenylalanyl-tRNA(Phe) + an N-terminal L-alpha-aminoacyl-[protein] = an N-terminal L-phenylalanyl-L-alpha-aminoacyl-[protein] + tRNA(Phe). In terms of biological role, functions in the N-end rule pathway of protein degradation where it conjugates Leu, Phe and, less efficiently, Met from aminoacyl-tRNAs to the N-termini of proteins containing an N-terminal arginine or lysine. The protein is Leucyl/phenylalanyl-tRNA--protein transferase of Synechococcus sp. (strain JA-3-3Ab) (Cyanobacteria bacterium Yellowstone A-Prime).